We begin with the raw amino-acid sequence, 111 residues long: Colipase (111 aa).

The N-terminal stretch at 1 to 17 (MEKVLALVLLTLAVAYA) is a signal peptide. A propeptide spans 18–22 (APDPR) (enterostatin, activation peptide). Intrachain disulfides connect Cys-34/Cys-45, Cys-40/Cys-56, Cys-44/Cys-78, Cys-66/Cys-86, and Cys-80/Cys-104.

The protein belongs to the colipase family. As to quaternary structure, forms a 1:1 stoichiometric complex with pancreatic lipase. In terms of tissue distribution, expressed by the pancreas.

It is found in the secreted. Its function is as follows. Colipase is a cofactor of pancreatic lipase. It allows the lipase to anchor itself to the lipid-water interface. Without colipase the enzyme is washed off by bile salts, which have an inhibitory effect on the lipase. In terms of biological role, enterostatin has a biological activity as a satiety signal. The polypeptide is Colipase (CLPS) (Myocastor coypus (Coypu)).